The primary structure comprises 926 residues: Alpha-aminoadipic semialdehyde synthase, mitochondrial (926 aa).

The N-terminal 27 residues, 1-27, are a transit peptide targeting the mitochondrion; sequence MLQVHRTGLGRLGVSLSKGLHHKAVLA. Positions 28–476 are lysine-ketoglutarate reductase; the sequence is VRREDVNAWE…ESRERAQSLS (449 aa). An N6-acetyllysine mark is found at K48 and K56. K93 bears the N6-acetyllysine; alternate mark. K93 is subject to N6-succinyllysine; alternate. K128 is subject to N6-acetyllysine. K138 carries the N6-acetyllysine; alternate modification. The residue at position 138 (K138) is an N6-succinyllysine; alternate. K274 is modified (N6-succinyllysine). K286 carries the N6-acetyllysine; alternate modification. K286 carries the post-translational modification N6-succinyllysine; alternate. At K333 the chain carries N6-succinyllysine. K458 is modified (N6-acetyllysine; alternate). K458 carries the N6-succinyllysine; alternate modification. The saccharopine dehydrogenase stretch occupies residues 477–926; it reads MGTRRKVLVL…IYTTQSTIKP (450 aa). Residues S488, D512, and Q516 each coordinate NAD(+). K523 bears the N6-acetyllysine; alternate mark. Residue K523 is modified to N6-succinyllysine; alternate. Residue I533 participates in NAD(+) binding. K535 carries the N6-acetyllysine; alternate modification. K535 carries the post-translational modification N6-succinyllysine; alternate. 3 residues coordinate NAD(+): L554, A576, and S577. Residue 577-578 coordinates L-saccharopine; the sequence is SY. Residue K584 is modified to N6-acetyllysine; alternate. K584 is subject to N6-succinyllysine; alternate. The NAD(+) site is built by L603, D604, and P605. Residue D604 coordinates L-saccharopine. R703 contributes to the L-saccharopine binding site. K707 bears the N6-acetyllysine mark. 724–726 is a binding site for L-saccharopine; the sequence is TLR. Residue K732 is modified to N6-succinyllysine. The residue at position 739 (K739) is an N6-acetyllysine. The residue at position 761 (K761) is an N6-acetyllysine; alternate. Position 761 is an N6-succinyllysine; alternate (K761). K780 is modified (N6-acetyllysine).

The protein in the N-terminal section; belongs to the AlaDH/PNT family. In the C-terminal section; belongs to the saccharopine dehydrogenase family. As to quaternary structure, homotetramer. In terms of tissue distribution, expressed in all 16 tissues examined with highest expression in the liver.

The protein resides in the mitochondrion. It catalyses the reaction L-saccharopine + NADP(+) + H2O = L-lysine + 2-oxoglutarate + NADPH + H(+). The catalysed reaction is L-saccharopine + NAD(+) + H2O = (S)-2-amino-6-oxohexanoate + L-glutamate + NADH + H(+). Its pathway is amino-acid degradation; L-lysine degradation via saccharopine pathway; glutaryl-CoA from L-lysine: step 1/6. It participates in amino-acid degradation; L-lysine degradation via saccharopine pathway; glutaryl-CoA from L-lysine: step 2/6. Functionally, bifunctional enzyme that catalyzes the first two steps in lysine degradation. This chain is Alpha-aminoadipic semialdehyde synthase, mitochondrial, found in Homo sapiens (Human).